The following is a 363-amino-acid chain: NADH-quinone oxidoreductase subunit H (363 aa).

10 helical membrane-spanning segments follow: residues 29-49 (VLKILLIAVPVIVAVAFYVVW), 62-82 (GPMYVGMGIFQAFADVFKLLF), 96-116 (FVIAPLLTLAPAFAAWSVVPF), 127-147 (VGLLYLLAMTSLGVYGIILAG), 163-183 (AAQVVSYEIAMGFALVGVMIA), 202-222 (FFDWFLIPLFPLFIVYWVSGV), 238-257 (EIVAGHMVEYSGGAFALFFL), 264-286 (ILVSFLISIFFLGGWLSPIQGWV), 299-319 (KGGWPWLLMKVFFFASAYIWF), and 339-359 (FIPLTIVWIAVTALMVFYGVI).

The protein belongs to the complex I subunit 1 family. As to quaternary structure, NDH-1 is composed of 14 different subunits. Subunits NuoA, H, J, K, L, M, N constitute the membrane sector of the complex.

It is found in the cell inner membrane. The catalysed reaction is a quinone + NADH + 5 H(+)(in) = a quinol + NAD(+) + 4 H(+)(out). NDH-1 shuttles electrons from NADH, via FMN and iron-sulfur (Fe-S) centers, to quinones in the respiratory chain. The immediate electron acceptor for the enzyme in this species is believed to be ubiquinone. Couples the redox reaction to proton translocation (for every two electrons transferred, four hydrogen ions are translocated across the cytoplasmic membrane), and thus conserves the redox energy in a proton gradient. This subunit may bind ubiquinone. In Xanthomonas euvesicatoria pv. vesicatoria (strain 85-10) (Xanthomonas campestris pv. vesicatoria), this protein is NADH-quinone oxidoreductase subunit H.